Consider the following 325-residue polypeptide: GMP reductase (325 aa).

Cys-173 (thioimidate intermediate) is an active-site residue. Residue 202–225 (IIADGGIRSHGDIAKSVRFGATMV) coordinates NADP(+).

The protein belongs to the IMPDH/GMPR family. GuaC type 2 subfamily.

It catalyses the reaction IMP + NH4(+) + NADP(+) = GMP + NADPH + 2 H(+). Catalyzes the irreversible NADPH-dependent deamination of GMP to IMP. It functions in the conversion of nucleobase, nucleoside and nucleotide derivatives of G to A nucleotides, and in maintaining the intracellular balance of A and G nucleotides. The protein is GMP reductase of Acidovorax ebreus (strain TPSY) (Diaphorobacter sp. (strain TPSY)).